Consider the following 307-residue polypeptide: Ribosomal RNA small subunit methyltransferase H (307 aa).

S-adenosyl-L-methionine contacts are provided by residues 34–36 (GGH), Asp-54, Phe-79, Asp-101, and Gln-108.

This sequence belongs to the methyltransferase superfamily. RsmH family.

It localises to the cytoplasm. It catalyses the reaction cytidine(1402) in 16S rRNA + S-adenosyl-L-methionine = N(4)-methylcytidine(1402) in 16S rRNA + S-adenosyl-L-homocysteine + H(+). Its function is as follows. Specifically methylates the N4 position of cytidine in position 1402 (C1402) of 16S rRNA. The polypeptide is Ribosomal RNA small subunit methyltransferase H (Vesicomyosocius okutanii subsp. Calyptogena okutanii (strain HA)).